Consider the following 193-residue polypeptide: Recombination protein RecR (193 aa).

Residues 61–76 (CSSCNALSESEVCEIC) form a C4-type zinc finger. Residues 84–170 (SQLCMVLHPR…TFTKIAQGVP (87 aa)) enclose the Toprim domain.

This sequence belongs to the RecR family.

May play a role in DNA repair. It seems to be involved in an RecBC-independent recombinational process of DNA repair. It may act with RecF and RecO. The polypeptide is Recombination protein RecR (Helicobacter pylori (strain P12)).